The sequence spans 322 residues: Aspartate carbamoyltransferase catalytic subunit (322 aa).

Carbamoyl phosphate contacts are provided by Arg65 and Thr66. Lys93 is an L-aspartate binding site. Residues Arg115, His143, and Gln146 each coordinate carbamoyl phosphate. The L-aspartate site is built by Arg176 and Arg230. Residues Gly271 and Pro272 each contribute to the carbamoyl phosphate site.

It belongs to the aspartate/ornithine carbamoyltransferase superfamily. ATCase family. As to quaternary structure, heterododecamer (2C3:3R2) of six catalytic PyrB chains organized as two trimers (C3), and six regulatory PyrI chains organized as three dimers (R2).

The catalysed reaction is carbamoyl phosphate + L-aspartate = N-carbamoyl-L-aspartate + phosphate + H(+). The protein operates within pyrimidine metabolism; UMP biosynthesis via de novo pathway; (S)-dihydroorotate from bicarbonate: step 2/3. In terms of biological role, catalyzes the condensation of carbamoyl phosphate and aspartate to form carbamoyl aspartate and inorganic phosphate, the committed step in the de novo pyrimidine nucleotide biosynthesis pathway. The sequence is that of Aspartate carbamoyltransferase catalytic subunit from Brucella anthropi (strain ATCC 49188 / DSM 6882 / CCUG 24695 / JCM 21032 / LMG 3331 / NBRC 15819 / NCTC 12168 / Alc 37) (Ochrobactrum anthropi).